The chain runs to 462 residues: Glycine--tRNA ligase (462 aa).

Arg-94 and Glu-143 together coordinate substrate. Residues 175-177 (RNE), 185-190 (FRTCEF), 259-260 (EL), and 308-311 (GLTR) each bind ATP. Position 190-194 (190-194 (FEQME)) interacts with substrate. 304-308 (ETSAG) provides a ligand contact to substrate.

The protein belongs to the class-II aminoacyl-tRNA synthetase family. As to quaternary structure, homodimer.

The protein localises to the cytoplasm. It carries out the reaction tRNA(Gly) + glycine + ATP = glycyl-tRNA(Gly) + AMP + diphosphate. Catalyzes the attachment of glycine to tRNA(Gly). This chain is Glycine--tRNA ligase, found in Treponema pallidum (strain Nichols).